The primary structure comprises 504 residues: MSDKYIMAIDEGTTSTRAIIFDKKGNKVAEGQKEFRQYFPQPGWVEHDANEIWNAVLSTIANSFISSGIQPKQIAGIGITNQRETTIIWDKETGLPIYNAIVWQSRQTSDIAQKLIDEGYSDTIHEKTGLIIDAYFSATKIRWILDHVEGAQERAEKGELLFGTIDTWLTWKLTGGKVHVTDYSNASRTMLFNIHDLKWDKEILELLNIPEALLPEVKGNSEIYGQTAAYHFFGSQVPISGMAGDQQSALFGQLALEDGTVKNTYGTGSFIVMNTGNKPVLSKNNLLTTIGYSIDGKINFALEGSVFVSGSALQWLRDSMEIIESAPESERAANESTNHNEVYVVPAFTGLGAPYWDSDARGAVFGLTRGTTKNDFIKATLQSLAYQTRDVLDTMEKDTGIKIPVLRVDGGAAMNNYLLQFQSDLLNKSVERAGNLETTALGVAFLAGLAVGFWKDTDELKELFTVGRRFEPEMSDDAREYLYAGWKNAVEATRIFKHKINENL.

Thr13 provides a ligand contact to ADP. The ATP site is built by Thr13, Thr14, and Ser15. Position 13 (Thr13) interacts with sn-glycerol 3-phosphate. Arg17 is a binding site for ADP. The sn-glycerol 3-phosphate site is built by Arg83, Glu84, and Tyr135. Glycerol is bound by residues Arg83, Glu84, and Tyr135. A Phosphohistidine; by HPr modification is found at His231. A sn-glycerol 3-phosphate-binding site is contributed by Asp245. Glycerol is bound by residues Asp245 and Gln246. Residues Thr267 and Gly310 each contribute to the ADP site. Positions 267, 310, 314, and 411 each coordinate ATP. 2 residues coordinate ADP: Gly411 and Asn415.

The protein belongs to the FGGY kinase family. As to quaternary structure, homotetramer and homodimer (in equilibrium). Post-translationally, the phosphoenolpyruvate-dependent sugar phosphotransferase system (PTS), including enzyme I, and histidine-containing protein (HPr) are required for the phosphorylation, which leads to the activation of the enzyme.

The enzyme catalyses glycerol + ATP = sn-glycerol 3-phosphate + ADP + H(+). It functions in the pathway polyol metabolism; glycerol degradation via glycerol kinase pathway; sn-glycerol 3-phosphate from glycerol: step 1/1. With respect to regulation, activated by phosphorylation and inhibited by fructose 1,6-bisphosphate (FBP). In terms of biological role, key enzyme in the regulation of glycerol uptake and metabolism. Catalyzes the phosphorylation of glycerol to yield sn-glycerol 3-phosphate. This Ligilactobacillus salivarius (strain UCC118) (Lactobacillus salivarius) protein is Glycerol kinase.